The following is a 442-amino-acid chain: Histidine--tRNA ligase (442 aa).

This sequence belongs to the class-II aminoacyl-tRNA synthetase family. Homodimer.

It localises to the cytoplasm. It catalyses the reaction tRNA(His) + L-histidine + ATP = L-histidyl-tRNA(His) + AMP + diphosphate + H(+). The chain is Histidine--tRNA ligase from Wolinella succinogenes (strain ATCC 29543 / DSM 1740 / CCUG 13145 / JCM 31913 / LMG 7466 / NCTC 11488 / FDC 602W) (Vibrio succinogenes).